Here is a 160-residue protein sequence, read N- to C-terminus: Glyoxalase domain-containing protein 5 (160 aa).

Residues 37-157 (RLDHIVMTVK…DRNLIEVSNY (121 aa)) form the VOC domain.

Belongs to the glyoxalase I family.

This is Glyoxalase domain-containing protein 5 (GLOD5) from Homo sapiens (Human).